The chain runs to 543 residues: Light-independent protochlorophyllide reductase subunit B (543 aa).

Asp36 is a [4Fe-4S] cluster binding site. Asp287 serves as the catalytic Proton donor. Substrate is bound at residue 422–423; the sequence is GL.

This sequence belongs to the ChlB/BchB/BchZ family. As to quaternary structure, protochlorophyllide reductase is composed of three subunits; BchL, BchN and BchB. Forms a heterotetramer of two BchB and two BchN subunits. Requires [4Fe-4S] cluster as cofactor.

It carries out the reaction chlorophyllide a + oxidized 2[4Fe-4S]-[ferredoxin] + 2 ADP + 2 phosphate = protochlorophyllide a + reduced 2[4Fe-4S]-[ferredoxin] + 2 ATP + 2 H2O. The protein operates within porphyrin-containing compound metabolism; bacteriochlorophyll biosynthesis (light-independent). Component of the dark-operative protochlorophyllide reductase (DPOR) that uses Mg-ATP and reduced ferredoxin to reduce ring D of protochlorophyllide (Pchlide) to form chlorophyllide a (Chlide). This reaction is light-independent. The NB-protein (BchN-BchB) is the catalytic component of the complex. This chain is Light-independent protochlorophyllide reductase subunit B, found in Rubrivivax gelatinosus (strain NBRC 100245 / IL144).